We begin with the raw amino-acid sequence, 817 residues long: Kinesin-like protein 2 (817 aa).

The segment at 1-155 (MEEEGHKSLT…YNDEKSVNAS (155 aa)) is disordered. The segment covering 8–23 (SLTSHLPQSSSSLSQS) has biased composition (low complexity). Positions 39–60 (IKTNSSSSNILKPRLSLQNEVN) are enriched in polar residues. A compositionally biased stretch (low complexity) spans 76–86 (SLASVKSSSLA). Residues 106 to 116 (PISSRSVSASS) are compositionally biased toward polar residues. Low complexity predominate over residues 122–132 (ASAVSSSLNSS). Residues 155–242 (SALRTTEDRL…VSQKGMESLE (88 aa)) adopt a coiled-coil conformation. ATP-binding residues include Asn-473, Arg-475, Arg-479, Glu-543, Gly-566, Ser-567, Gly-568, Lys-569, Thr-570, and Thr-778. A Kinesin motor domain is found at 473–807 (NIRVFCRVRP…LRFATKVNNT (335 aa)).

Belongs to the TRAFAC class myosin-kinesin ATPase superfamily. Kinesin family. NCD subfamily.

It is found in the cytoplasm. The protein localises to the cytoskeleton. Its subcellular location is the spindle. It localises to the nucleus. It carries out the reaction ATP + H2O = ADP + phosphate + H(+). It catalyses the reaction ATP + H2O + a kinesin associated with a microtubule at position (n) = ADP + phosphate + a kinesin associated with a microtubule at position (n-1, toward the minus end).. Minus end-directed microtubule (MT) motor that is involved in spindle microtubule shortening, kinetochore capture, and polarization of cytoplasmic microtubules. During mitosis, promotes spindle microtubule shortening by depolymerization. During metaphase, involved in the recapture of kinetochores displaced from the spindle and their transport towards the spindle pole body; promotes transport both by microtubule end-on pulling and by lateral sliding along the side of the microtubule. During interphase, required for the polarization of cytoplasmic microtubules where it orients the microtubule plus ends toward the cell ends and the minus ends toward the cell center. Required for karyogamy. In Schizosaccharomyces pombe (strain 972 / ATCC 24843) (Fission yeast), this protein is Kinesin-like protein 2.